The chain runs to 204 residues: MITAEMVKELREKTGAGMMDCKKALEDAGGDMDKAIELLRERGLAKAAKKASRVAAEGIVESYIHGNGRIGVLVEINCETDFVARNEEFRQFAKDIAMQIAAANPKYVSREEVPLDVIEKEKTILRQQALNEGKPENVVDRIVEGRLEKFFEEVCLLEQPWIKNPDMKIKDLLTEKIAKIGENIVIRRFARFERGEGIEKAASC.

The tract at residues 80–83 (TDFV) is involved in Mg(2+) ion dislocation from EF-Tu.

It belongs to the EF-Ts family.

The protein localises to the cytoplasm. Associates with the EF-Tu.GDP complex and induces the exchange of GDP to GTP. It remains bound to the aminoacyl-tRNA.EF-Tu.GTP complex up to the GTP hydrolysis stage on the ribosome. The chain is Elongation factor Ts from Caldicellulosiruptor bescii (strain ATCC BAA-1888 / DSM 6725 / KCTC 15123 / Z-1320) (Anaerocellum thermophilum).